Here is a 514-residue protein sequence, read N- to C-terminus: Ferrochelatase-2, chloroplastic (514 aa).

This sequence belongs to the ferrochelatase family.

It is found in the plastid. The protein resides in the chloroplast. It catalyses the reaction heme b + 2 H(+) = protoporphyrin IX + Fe(2+). It functions in the pathway porphyrin-containing compound metabolism; protoheme biosynthesis; protoheme from protoporphyrin-IX: step 1/1. In terms of biological role, catalyzes the ferrous insertion into protoporphyrin IX. The sequence is that of Ferrochelatase-2, chloroplastic (HEMH) from Cucumis sativus (Cucumber).